The chain runs to 231 residues: DNA damage response protein C (231 aa).

Homodimer.

The protein resides in the cytoplasm. It is found in the nucleoid. Its function is as follows. Appears to contribute to D.radiodurans capacity to survive exposure to ionizing radiation. Likely functions as a DNA damage-induced nucleoid-associated protein (NAP) that contributes to the enhanced level of nucleoid compaction after irradiation by bridging DNA duplexes, thereby limiting the dispersion of the fragmented genome immediately after irradiation to facilitate subsequent DNA repair. In vitro, binds both ssDNA and dsDNA, and is able to compact circular DNA, circularize linear DNA, anneal complementary DNA strands and protect DNA from nucleases. This Deinococcus radiodurans (strain ATCC 13939 / DSM 20539 / JCM 16871 / CCUG 27074 / LMG 4051 / NBRC 15346 / NCIMB 9279 / VKM B-1422 / R1) protein is DNA damage response protein C.